Reading from the N-terminus, the 207-residue chain is MRLNQNTLLLGKKVVLVPYTSEHVPSRYHEWMKSEELQRLTASEPLTLEQEYAMQCSWQEDADKCTFIVLDAEKWQAQPGATEESCMVGDVNLFLTDLEDLTLGEIEVMIAEPSCRGKGLGTEAVLAMLSYGVTTLGLTKFEAKIGQGNEPSIRMFQKLHFEQVATSSVFQEVTLRLTVSESEHQWLLEQTSHVEEKPYRDGSAEPC.

An N-acetyltransferase domain is found at Glu-35–Ser-180.

It belongs to the acetyltransferase family. GNAT subfamily.

It carries out the reaction N-terminal L-methionyl-[tubulin] + acetyl-CoA = N-terminal N(alpha)-acetyl-L-methionyl-[tubulin] + CoA + H(+). In terms of biological role, N-acetyltransferase that mediates the acetylation of the N-terminal residues of alpha- and beta-tubulin. The chain is Alpha/beta-tubulin-N-acetyltransferase 9 (NAT9) from Homo sapiens (Human).